The sequence spans 342 residues: L-lysine 2,3-aminomutase (342 aa).

The Radical SAM core domain occupies histidine 106–glutamate 329. The [4Fe-4S] cluster site is built by cysteine 120, cysteine 124, and cysteine 127. Lysine 332 bears the N6-(pyridoxal phosphate)lysine mark.

The protein belongs to the radical SAM superfamily. KamA family. [4Fe-4S] cluster serves as cofactor. Pyridoxal 5'-phosphate is required as a cofactor.

The enzyme catalyses L-lysine = D-beta-lysine. Its function is as follows. With EpmA is involved in the beta-lysylation step of the post-translational modification of translation elongation factor P (EF-P) on 'Lys-34'. EpmB appears to act before EpmA. Displays lysine 2,3-aminomutase activity, producing (R)-beta-lysine from (S)-alpha-lysine (L-lysine). Cannot use (S)-ornithine or (R)-alpha-lysine as a substrate. The chain is L-lysine 2,3-aminomutase (epmB) from Escherichia coli (strain K12).